Here is a 356-residue protein sequence, read N- to C-terminus: UDP-N-acetylglucosamine--N-acetylmuramyl-(pentapeptide) pyrophosphoryl-undecaprenol N-acetylglucosamine transferase (356 aa).

Residues 12–14 (TGG), Asn124, Arg163, Ser188, Ile242, 261–266 (ALTVSE), and Gln287 each bind UDP-N-acetyl-alpha-D-glucosamine.

This sequence belongs to the glycosyltransferase 28 family. MurG subfamily.

It localises to the cell inner membrane. The catalysed reaction is di-trans,octa-cis-undecaprenyl diphospho-N-acetyl-alpha-D-muramoyl-L-alanyl-D-glutamyl-meso-2,6-diaminopimeloyl-D-alanyl-D-alanine + UDP-N-acetyl-alpha-D-glucosamine = di-trans,octa-cis-undecaprenyl diphospho-[N-acetyl-alpha-D-glucosaminyl-(1-&gt;4)]-N-acetyl-alpha-D-muramoyl-L-alanyl-D-glutamyl-meso-2,6-diaminopimeloyl-D-alanyl-D-alanine + UDP + H(+). It functions in the pathway cell wall biogenesis; peptidoglycan biosynthesis. In terms of biological role, cell wall formation. Catalyzes the transfer of a GlcNAc subunit on undecaprenyl-pyrophosphoryl-MurNAc-pentapeptide (lipid intermediate I) to form undecaprenyl-pyrophosphoryl-MurNAc-(pentapeptide)GlcNAc (lipid intermediate II). The sequence is that of UDP-N-acetylglucosamine--N-acetylmuramyl-(pentapeptide) pyrophosphoryl-undecaprenol N-acetylglucosamine transferase from Ectopseudomonas mendocina (strain ymp) (Pseudomonas mendocina).